The primary structure comprises 163 residues: Phosphopantetheine adenylyltransferase (163 aa).

Threonine 10 contacts substrate. Residues 10 to 11 (TF) and histidine 18 each bind ATP. Lysine 42, leucine 74, and arginine 88 together coordinate substrate. Residues 89-91 (GLR), glutamate 99, and 124-130 (NSFISST) each bind ATP.

Belongs to the bacterial CoaD family. Homohexamer. Requires Mg(2+) as cofactor.

The protein localises to the cytoplasm. It carries out the reaction (R)-4'-phosphopantetheine + ATP + H(+) = 3'-dephospho-CoA + diphosphate. Its pathway is cofactor biosynthesis; coenzyme A biosynthesis; CoA from (R)-pantothenate: step 4/5. Reversibly transfers an adenylyl group from ATP to 4'-phosphopantetheine, yielding dephospho-CoA (dPCoA) and pyrophosphate. This is Phosphopantetheine adenylyltransferase from Shewanella baltica (strain OS223).